A 473-amino-acid polypeptide reads, in one-letter code: ATP synthase subunit beta (473 aa).

153–160 is an ATP binding site; the sequence is GGAGVGKT.

Belongs to the ATPase alpha/beta chains family. In terms of assembly, F-type ATPases have 2 components, CF(1) - the catalytic core - and CF(0) - the membrane proton channel. CF(1) has five subunits: alpha(3), beta(3), gamma(1), delta(1), epsilon(1). CF(0) has three main subunits: a(1), b(2) and c(9-12). The alpha and beta chains form an alternating ring which encloses part of the gamma chain. CF(1) is attached to CF(0) by a central stalk formed by the gamma and epsilon chains, while a peripheral stalk is formed by the delta and b chains.

The protein resides in the cell inner membrane. The catalysed reaction is ATP + H2O + 4 H(+)(in) = ADP + phosphate + 5 H(+)(out). Functionally, produces ATP from ADP in the presence of a proton gradient across the membrane. The catalytic sites are hosted primarily by the beta subunits. The chain is ATP synthase subunit beta from Rickettsia akari (strain Hartford).